Here is a 401-residue protein sequence, read N- to C-terminus: Probable tRNA sulfurtransferase (401 aa).

The THUMP domain maps to 60–165 (EEICSLLKNI…EEATFLTIRN (106 aa)). Residues 183 to 184 (ML), 208 to 209 (HF), Arg265, Gly287, and Gln296 contribute to the ATP site.

The protein belongs to the ThiI family.

The protein resides in the cytoplasm. It carries out the reaction [ThiI sulfur-carrier protein]-S-sulfanyl-L-cysteine + a uridine in tRNA + 2 reduced [2Fe-2S]-[ferredoxin] + ATP + H(+) = [ThiI sulfur-carrier protein]-L-cysteine + a 4-thiouridine in tRNA + 2 oxidized [2Fe-2S]-[ferredoxin] + AMP + diphosphate. It catalyses the reaction [ThiS sulfur-carrier protein]-C-terminal Gly-Gly-AMP + S-sulfanyl-L-cysteinyl-[cysteine desulfurase] + AH2 = [ThiS sulfur-carrier protein]-C-terminal-Gly-aminoethanethioate + L-cysteinyl-[cysteine desulfurase] + A + AMP + 2 H(+). It participates in cofactor biosynthesis; thiamine diphosphate biosynthesis. In terms of biological role, catalyzes the ATP-dependent transfer of a sulfur to tRNA to produce 4-thiouridine in position 8 of tRNAs, which functions as a near-UV photosensor. Also catalyzes the transfer of sulfur to the sulfur carrier protein ThiS, forming ThiS-thiocarboxylate. This is a step in the synthesis of thiazole, in the thiamine biosynthesis pathway. The sulfur is donated as persulfide by IscS. In Bacillus velezensis (strain DSM 23117 / BGSC 10A6 / LMG 26770 / FZB42) (Bacillus amyloliquefaciens subsp. plantarum), this protein is Probable tRNA sulfurtransferase.